A 158-amino-acid polypeptide reads, in one-letter code: UPF0758 protein VC_1786 (158 aa).

The region spanning 37-158 (TFARTENTTE…SVSFAERGWL (122 aa)) is the MPN domain. Zn(2+) is bound by residues H108, H110, and D121. The JAMM motif signature appears at 108-121 (HNHPSGDPEPSQAD).

The protein belongs to the UPF0758 family.

This chain is UPF0758 protein VC_1786, found in Vibrio cholerae serotype O1 (strain ATCC 39315 / El Tor Inaba N16961).